A 173-amino-acid polypeptide reads, in one-letter code: Translation initiation factor IF-3 (173 aa).

Belongs to the IF-3 family. In terms of assembly, monomer.

It is found in the cytoplasm. In terms of biological role, IF-3 binds to the 30S ribosomal subunit and shifts the equilibrium between 70S ribosomes and their 50S and 30S subunits in favor of the free subunits, thus enhancing the availability of 30S subunits on which protein synthesis initiation begins. The polypeptide is Translation initiation factor IF-3 (Methylorubrum populi (strain ATCC BAA-705 / NCIMB 13946 / BJ001) (Methylobacterium populi)).